The chain runs to 503 residues: Lactation elevated protein 1 homolog B (503 aa).

The interval 108-155 (LQNQPTSELQDKVGSRETVNICRPDENVSNEKEDQQEESSKPHPPQGY) is disordered. A compositionally biased stretch (basic and acidic residues) spans 130-148 (RPDENVSNEKEDQQEESSK). 159 to 166 (GNVGTGKT) is an ATP binding site.

The protein belongs to the AFG1 ATPase family.

The chain is Lactation elevated protein 1 homolog B (lace1b) from Danio rerio (Zebrafish).